The sequence spans 79 residues: Protein GOLVEN 2 (79 aa).

An N-terminal signal peptide occupies residues M1–A26. A propeptide spanning residues R27–M65 is cleaved from the precursor. The tract at residues K49 to R79 is disordered. Y67 is subject to Sulfotyrosine. The residue at position 75 (P75) is a Hydroxyproline.

This sequence belongs to the RGF family. In terms of assembly, binds to LRR receptor-like serine/threonine-protein kinases to trigger their dimerization with SERK proteins and subsequent signaling. In terms of tissue distribution, expressed in siliques, stems, hypocotyls, shoot apex, leaves, flowers and cotyledons, and, to a lower extent, in roots.

It localises to the secreted. The protein resides in the endoplasmic reticulum. In terms of biological role, signaling peptide (root growth factor) that regulates the pattern of root growth and lateral root development by modulating the length and the number of cortical cells in the root apical meristem (RAM), and the anticlinal asymmetric cell divisions in lateral root initiation cells. Also involved in the regulation of hypocotyl bending and root gravitropism, probably by influencing the formation of auxin gradients. Maintains the postembryonic root stem cell niche. This is Protein GOLVEN 2 from Arabidopsis thaliana (Mouse-ear cress).